Here is a 313-residue protein sequence, read N- to C-terminus: 4-hydroxy-3-methylbut-2-enyl diphosphate reductase (313 aa).

Position 13 (Cys-13) interacts with [4Fe-4S] cluster. Residues His-41 and His-75 each coordinate (2E)-4-hydroxy-3-methylbut-2-enyl diphosphate. The dimethylallyl diphosphate site is built by His-41 and His-75. The isopentenyl diphosphate site is built by His-41 and His-75. [4Fe-4S] cluster is bound at residue Cys-97. His-125 provides a ligand contact to (2E)-4-hydroxy-3-methylbut-2-enyl diphosphate. His-125 is a binding site for dimethylallyl diphosphate. An isopentenyl diphosphate-binding site is contributed by His-125. Residue Glu-127 is the Proton donor of the active site. Thr-168 lines the (2E)-4-hydroxy-3-methylbut-2-enyl diphosphate pocket. Cys-218 is a [4Fe-4S] cluster binding site. (2E)-4-hydroxy-3-methylbut-2-enyl diphosphate contacts are provided by Ser-246, Ser-247, Asn-248, and Ser-295. Dimethylallyl diphosphate is bound by residues Ser-246, Ser-247, Asn-248, and Ser-295. Ser-246, Ser-247, Asn-248, and Ser-295 together coordinate isopentenyl diphosphate.

This sequence belongs to the IspH family. [4Fe-4S] cluster serves as cofactor.

It carries out the reaction isopentenyl diphosphate + 2 oxidized [2Fe-2S]-[ferredoxin] + H2O = (2E)-4-hydroxy-3-methylbut-2-enyl diphosphate + 2 reduced [2Fe-2S]-[ferredoxin] + 2 H(+). The enzyme catalyses dimethylallyl diphosphate + 2 oxidized [2Fe-2S]-[ferredoxin] + H2O = (2E)-4-hydroxy-3-methylbut-2-enyl diphosphate + 2 reduced [2Fe-2S]-[ferredoxin] + 2 H(+). It functions in the pathway isoprenoid biosynthesis; dimethylallyl diphosphate biosynthesis; dimethylallyl diphosphate from (2E)-4-hydroxy-3-methylbutenyl diphosphate: step 1/1. Its pathway is isoprenoid biosynthesis; isopentenyl diphosphate biosynthesis via DXP pathway; isopentenyl diphosphate from 1-deoxy-D-xylulose 5-phosphate: step 6/6. Functionally, catalyzes the conversion of 1-hydroxy-2-methyl-2-(E)-butenyl 4-diphosphate (HMBPP) into a mixture of isopentenyl diphosphate (IPP) and dimethylallyl diphosphate (DMAPP). Acts in the terminal step of the DOXP/MEP pathway for isoprenoid precursor biosynthesis. The protein is 4-hydroxy-3-methylbut-2-enyl diphosphate reductase of Chlorobium phaeovibrioides (strain DSM 265 / 1930) (Prosthecochloris vibrioformis (strain DSM 265)).